Consider the following 273-residue polypeptide: Phosphatidylglycerol--prolipoprotein diacylglyceryl transferase (273 aa).

Helical transmembrane passes span 21–41, 60–80, 95–115, 124–144, 176–196, 203–223, and 237–257; these read VSIRWYGLMYLVGFMFALWLA, LLFAGFLGVVIGGRVGYVIFY, VWTGGMSFHGGLLGVITAMFW, FFGVADFVAPLVPFGLGMGRM, SQLYEMLLEGVVLFFILNWFI, GSVSGLFLAGYGTFRFLVEFV, and ISMGQILSMPMIVLGILMMVW. R143 contacts a 1,2-diacyl-sn-glycero-3-phospho-(1'-sn-glycerol).

This sequence belongs to the Lgt family.

It localises to the cell inner membrane. The enzyme catalyses L-cysteinyl-[prolipoprotein] + a 1,2-diacyl-sn-glycero-3-phospho-(1'-sn-glycerol) = an S-1,2-diacyl-sn-glyceryl-L-cysteinyl-[prolipoprotein] + sn-glycerol 1-phosphate + H(+). It participates in protein modification; lipoprotein biosynthesis (diacylglyceryl transfer). Its function is as follows. Catalyzes the transfer of the diacylglyceryl group from phosphatidylglycerol to the sulfhydryl group of the N-terminal cysteine of a prolipoprotein, the first step in the formation of mature lipoproteins. The chain is Phosphatidylglycerol--prolipoprotein diacylglyceryl transferase from Vibrio parahaemolyticus serotype O3:K6 (strain RIMD 2210633).